We begin with the raw amino-acid sequence, 411 residues long: S-adenosylmethionine synthase (411 aa).

Residue histidine 15 coordinates ATP. A Mg(2+)-binding site is contributed by aspartate 17. A K(+)-binding site is contributed by glutamate 43. L-methionine is bound by residues glutamate 56 and glutamine 100. The segment at 100 to 110 (QSPDIAQGVNE) is flexible loop. ATP contacts are provided by residues 171-173 (DGK), 248-249 (KF), aspartate 257, 263-264 (RK), alanine 280, and lysine 284. Aspartate 257 provides a ligand contact to L-methionine. Residue lysine 288 coordinates L-methionine.

Belongs to the AdoMet synthase family. Homotetramer; dimer of dimers. Mg(2+) serves as cofactor. Requires K(+) as cofactor.

The protein localises to the cytoplasm. It catalyses the reaction L-methionine + ATP + H2O = S-adenosyl-L-methionine + phosphate + diphosphate. It participates in amino-acid biosynthesis; S-adenosyl-L-methionine biosynthesis; S-adenosyl-L-methionine from L-methionine: step 1/1. Catalyzes the formation of S-adenosylmethionine (AdoMet) from methionine and ATP. The overall synthetic reaction is composed of two sequential steps, AdoMet formation and the subsequent tripolyphosphate hydrolysis which occurs prior to release of AdoMet from the enzyme. This chain is S-adenosylmethionine synthase, found in Synechococcus sp. (strain CC9605).